We begin with the raw amino-acid sequence, 295 residues long: 3-methyl-2-oxobutanoate hydroxymethyltransferase (295 aa).

2 residues coordinate Mg(2+): D53 and D92. 3-methyl-2-oxobutanoate contacts are provided by residues 53–54, D92, and K122; that span reads DS. Position 124 (E124) interacts with Mg(2+). The active-site Proton acceptor is E191.

This sequence belongs to the PanB family. As to quaternary structure, homodecamer; pentamer of dimers. Requires Mg(2+) as cofactor.

Its subcellular location is the cytoplasm. It catalyses the reaction 3-methyl-2-oxobutanoate + (6R)-5,10-methylene-5,6,7,8-tetrahydrofolate + H2O = 2-dehydropantoate + (6S)-5,6,7,8-tetrahydrofolate. Its pathway is cofactor biosynthesis; (R)-pantothenate biosynthesis; (R)-pantoate from 3-methyl-2-oxobutanoate: step 1/2. In terms of biological role, catalyzes the reversible reaction in which hydroxymethyl group from 5,10-methylenetetrahydrofolate is transferred onto alpha-ketoisovalerate to form ketopantoate. The sequence is that of 3-methyl-2-oxobutanoate hydroxymethyltransferase from Koribacter versatilis (strain Ellin345).